We begin with the raw amino-acid sequence, 74 residues long: MNVKILLLLVGLNLVMHSNATGDSETNPAETLFIEEIFRRGCFKEGKWCPKSAPCCAPLKCKGPSIKQQKCVRE.

The N-terminal stretch at 1 to 20 (MNVKILLLLVGLNLVMHSNA) is a signal peptide. Residues 21–40 (TGDSETNPAETLFIEEIFRR) constitute a propeptide that is removed on maturation. 3 disulfides stabilise this stretch: cysteine 42/cysteine 56, cysteine 49/cysteine 61, and cysteine 55/cysteine 71.

The protein belongs to the neurotoxin 35 family. Expressed by the venom gland.

It is found in the secreted. Putative ion channel inhibitor. This Cyriopagopus schmidti (Chinese bird spider) protein is U12-theraphotoxin-Hs1a.